The chain runs to 267 residues: L-aspartate dehydrogenase 2 (267 aa).

NAD(+)-binding residues include Ala123 and Asn189. His219 is a catalytic residue.

The protein belongs to the L-aspartate dehydrogenase family.

The enzyme catalyses L-aspartate + NADP(+) + H2O = oxaloacetate + NH4(+) + NADPH + H(+). It carries out the reaction L-aspartate + NAD(+) + H2O = oxaloacetate + NH4(+) + NADH + H(+). The protein operates within cofactor biosynthesis; NAD(+) biosynthesis; iminoaspartate from L-aspartate (dehydrogenase route): step 1/1. Specifically catalyzes the NAD or NADP-dependent dehydrogenation of L-aspartate to iminoaspartate. In Bordetella pertussis (strain Tohama I / ATCC BAA-589 / NCTC 13251), this protein is L-aspartate dehydrogenase 2.